We begin with the raw amino-acid sequence, 55 residues long: uncharacterized protein (55 aa).

This is an uncharacterized protein from Bacillus subtilis (strain 168).